A 191-amino-acid polypeptide reads, in one-letter code: HTH-type transcriptional regulator YjdC (191 aa).

An HTH tetR-type domain is found at 1 to 60 (MQREDVLGEALKLLELQGIANTTLEMVAERVDYPLDELRRFWPDKEAILYDALRYLSQQI).

The chain is HTH-type transcriptional regulator YjdC (yjdC) from Escherichia coli (strain K12).